The following is a 71-amino-acid chain: Large ribosomal subunit protein bL31 (71 aa).

This sequence belongs to the bacterial ribosomal protein bL31 family. Type A subfamily. In terms of assembly, part of the 50S ribosomal subunit.

Functionally, binds the 23S rRNA. The sequence is that of Large ribosomal subunit protein bL31 from Metamycoplasma arthritidis (strain 158L3-1) (Mycoplasma arthritidis).